The sequence spans 333 residues: Glycerol-3-phosphate dehydrogenase [NAD(P)+] (333 aa).

NADPH contacts are provided by Trp-12, Lys-33, and Lys-105. Lys-105, Gly-136, and Ser-138 together coordinate sn-glycerol 3-phosphate. NADPH is bound at residue Ala-140. 5 residues coordinate sn-glycerol 3-phosphate: Lys-191, Asp-244, Ser-254, Arg-255, and Asn-256. Catalysis depends on Lys-191, which acts as the Proton acceptor. Arg-255 provides a ligand contact to NADPH. NADPH-binding residues include Val-279 and Glu-281.

The protein belongs to the NAD-dependent glycerol-3-phosphate dehydrogenase family.

It is found in the cytoplasm. The enzyme catalyses sn-glycerol 3-phosphate + NAD(+) = dihydroxyacetone phosphate + NADH + H(+). It catalyses the reaction sn-glycerol 3-phosphate + NADP(+) = dihydroxyacetone phosphate + NADPH + H(+). Its pathway is membrane lipid metabolism; glycerophospholipid metabolism. Its function is as follows. Catalyzes the reduction of the glycolytic intermediate dihydroxyacetone phosphate (DHAP) to sn-glycerol 3-phosphate (G3P), the key precursor for phospholipid synthesis. The sequence is that of Glycerol-3-phosphate dehydrogenase [NAD(P)+] from Protochlamydia amoebophila (strain UWE25).